The following is a 304-amino-acid chain: Aspartate carbamoyltransferase catalytic subunit (304 aa).

The carbamoyl phosphate site is built by Arg-49 and Thr-50. Residue Lys-77 participates in L-aspartate binding. Residues Arg-99, His-127, and Gln-130 each contribute to the carbamoyl phosphate site. Residues Arg-160 and Arg-211 each coordinate L-aspartate. Residues Ala-252 and Pro-253 each coordinate carbamoyl phosphate.

Belongs to the aspartate/ornithine carbamoyltransferase superfamily. ATCase family. In terms of assembly, heterododecamer (2C3:3R2) of six catalytic PyrB chains organized as two trimers (C3), and six regulatory PyrI chains organized as three dimers (R2).

The catalysed reaction is carbamoyl phosphate + L-aspartate = N-carbamoyl-L-aspartate + phosphate + H(+). It functions in the pathway pyrimidine metabolism; UMP biosynthesis via de novo pathway; (S)-dihydroorotate from bicarbonate: step 2/3. In terms of biological role, catalyzes the condensation of carbamoyl phosphate and aspartate to form carbamoyl aspartate and inorganic phosphate, the committed step in the de novo pyrimidine nucleotide biosynthesis pathway. The sequence is that of Aspartate carbamoyltransferase catalytic subunit from Bacillus mycoides (strain KBAB4) (Bacillus weihenstephanensis).